Here is a 663-residue protein sequence, read N- to C-terminus: Beta-galactosidase YesZ (663 aa).

Arg-107 contacts substrate. Cys-111 provides a ligand contact to Zn(2+). Asn-145 contributes to the substrate binding site. Glu-146 acts as the Proton donor in catalysis. 3 residues coordinate Zn(2+): Cys-154, Cys-156, and Cys-159. Catalysis depends on Glu-297, which acts as the Nucleophile. 346 to 349 (EQPH) is a substrate binding site.

It belongs to the glycosyl hydrolase 42 family. As to quaternary structure, homotrimer.

The catalysed reaction is Hydrolysis of terminal non-reducing beta-D-galactose residues in beta-D-galactosides.. In terms of biological role, may play a role in the degradation of rhamnogalacturonan derived from plant cell walls. The polypeptide is Beta-galactosidase YesZ (yesZ) (Bacillus licheniformis (strain ATCC 14580 / DSM 13 / JCM 2505 / CCUG 7422 / NBRC 12200 / NCIMB 9375 / NCTC 10341 / NRRL NRS-1264 / Gibson 46)).